Reading from the N-terminus, the 126-residue chain is Small ribosomal subunit protein uS13 (126 aa).

The tract at residues 96–126 is disordered; sequence PVRGQRTRTNARTRRGSRRTVAGKKKPAAKK. Over residues 100-126 the composition is skewed to basic residues; it reads QRTRTNARTRRGSRRTVAGKKKPAAKK.

Belongs to the universal ribosomal protein uS13 family. In terms of assembly, part of the 30S ribosomal subunit. Forms a loose heterodimer with protein S19. Forms two bridges to the 50S subunit in the 70S ribosome.

In terms of biological role, located at the top of the head of the 30S subunit, it contacts several helices of the 16S rRNA. In the 70S ribosome it contacts the 23S rRNA (bridge B1a) and protein L5 of the 50S subunit (bridge B1b), connecting the 2 subunits; these bridges are implicated in subunit movement. Contacts the tRNAs in the A and P-sites. The protein is Small ribosomal subunit protein uS13 of Thermosynechococcus vestitus (strain NIES-2133 / IAM M-273 / BP-1).